A 111-amino-acid polypeptide reads, in one-letter code: ASFQZAPPGBAKAGEKIFKTKCAQCHTVDKGAGHKQGPNLNGLFGRQSGTTAGYSYSAANKNMAVQWGENTLYDYLLNPKKYIPGTKMVFPGLKKPQDRADLIAYLKZSTA.

Residue Ala-1 is modified to N-acetylalanine. Heme c-binding residues include Cys-22, Cys-25, and His-26. Lys-80 is modified (N6,N6,N6-trimethyllysine). Met-88 lines the heme c pocket. Lys-94 bears the N6,N6,N6-trimethyllysine mark.

This sequence belongs to the cytochrome c family. Binds 1 heme c group covalently per subunit.

Its subcellular location is the mitochondrion intermembrane space. In terms of biological role, electron carrier protein. The oxidized form of the cytochrome c heme group can accept an electron from the heme group of the cytochrome c1 subunit of cytochrome reductase. Cytochrome c then transfers this electron to the cytochrome oxidase complex, the final protein carrier in the mitochondrial electron-transport chain. The chain is Cytochrome c from Gossypium barbadense (Sea Island cotton).